The following is a 129-amino-acid chain: Glycine cleavage system H protein (129 aa).

In terms of domain architecture, Lipoyl-binding spans 24-106 (TYTVGITEHA…YAGGWIFKIK (83 aa)). At Lys65 the chain carries N6-lipoyllysine.

Belongs to the GcvH family. In terms of assembly, the glycine cleavage system is composed of four proteins: P, T, L and H. (R)-lipoate serves as cofactor.

Functionally, the glycine cleavage system catalyzes the degradation of glycine. The H protein shuttles the methylamine group of glycine from the P protein to the T protein. This is Glycine cleavage system H protein from Shigella dysenteriae serotype 1 (strain Sd197).